The following is a 237-amino-acid chain: MSNPIYKRILLKLSGEALQGDEGFGIDPSILDRMALEIKELIEMGVEVGVVLGGGNLFRGAKLAKAGMNRVVGDHMGMLATVMNGLAMRDALHRADVNAKLMSAFQLNGICDTYNWSEAIKMLREKRVVIFSAGTGSPFFTTDSAACLRGIEIEADIVLKATKVDGVYDKDPAKFADAKLYNQLTYAEVIEQELQVMDLAAFTLARDHGMPIRVFNMVKPGALKQVITGTAEGTIIS.

ATP is bound at residue 12 to 15 (KLSG). The interval 20–25 (GDEGFG) is involved in allosteric activation by GTP. Gly-54 is a UMP binding site. ATP contacts are provided by Gly-55 and Arg-59. Residues Asp-74 and 135–142 (TGSPFFTT) contribute to the UMP site. ATP is bound by residues Thr-162, Tyr-168, and Asp-171.

The protein belongs to the UMP kinase family. Homohexamer.

The protein localises to the cytoplasm. It carries out the reaction UMP + ATP = UDP + ADP. It participates in pyrimidine metabolism; CTP biosynthesis via de novo pathway; UDP from UMP (UMPK route): step 1/1. Allosterically activated by GTP. Inhibited by UTP. Functionally, catalyzes the reversible phosphorylation of UMP to UDP. The chain is Uridylate kinase from Actinobacillus pleuropneumoniae serotype 5b (strain L20).